The following is a 269-amino-acid chain: GATA transcription factor 3 (269 aa).

Positions 136 to 143 match the Nuclear localization signal motif; it reads KPRTKRSR. The GATA-type zinc-finger motif lies at 176–230; the sequence is LVFQRRCSHCGTNNTPQWRTGPVGPKTLCNACGVRFKSGRLCPEYRPADSPTFSN. Positions 245 to 269 are disordered; it reads KSKELGEETGEASTKSDPVKFGSKW.

This sequence belongs to the type IV zinc-finger family. Class A subfamily. Mostly expressed in roots. Also expressed in stems, flowers and leaves.

Its subcellular location is the nucleus. Functionally, transcriptional activator that specifically binds 5'-GATA-3' or 5'-GAT-3' motifs within gene promoters. May be involved in the regulation of some light-responsive genes. The protein is GATA transcription factor 3 (GATA3) of Arabidopsis thaliana (Mouse-ear cress).